The chain runs to 149 residues: D-aminoacyl-tRNA deacylase (149 aa).

A Gly-cisPro motif, important for rejection of L-amino acids motif is present at residues 137 to 138 (GP).

The protein belongs to the DTD family. Homodimer.

The protein localises to the cytoplasm. The catalysed reaction is glycyl-tRNA(Ala) + H2O = tRNA(Ala) + glycine + H(+). The enzyme catalyses a D-aminoacyl-tRNA + H2O = a tRNA + a D-alpha-amino acid + H(+). Functionally, an aminoacyl-tRNA editing enzyme that deacylates mischarged D-aminoacyl-tRNAs. Also deacylates mischarged glycyl-tRNA(Ala), protecting cells against glycine mischarging by AlaRS. Acts via tRNA-based rather than protein-based catalysis; rejects L-amino acids rather than detecting D-amino acids in the active site. By recycling D-aminoacyl-tRNA to D-amino acids and free tRNA molecules, this enzyme counteracts the toxicity associated with the formation of D-aminoacyl-tRNA entities in vivo and helps enforce protein L-homochirality. The chain is D-aminoacyl-tRNA deacylase from Clostridium botulinum (strain Loch Maree / Type A3).